The following is a 498-amino-acid chain: Protein adenylyltransferase Fic (498 aa).

The helical transmembrane segment at 43–63 threads the bilayer; that stretch reads FAFLAFLAGSFLAFSLHALIS. 2 TPR repeats span residues 126-159 and 160-194; these read ALSS…APRH and PEVL…NPSH. An Inhibitory (S/T)XXXE(G/N) motif motif is present at residues 251-256; that stretch reads SVGIEG. Residues Glu-255 and 336–339 each bind ATP; that span reads VGGH. One can recognise a Fido domain in the interval 305 to 440; that stretch reads ITIKDILELH…IRPFVRFIAD (136 aa). Residue His-383 is part of the active site. ATP contacts are provided by residues 387-394, 419-420, and Asn-427; these read DGNGRTSR and YY.

The protein belongs to the fic family. In terms of assembly, homodimer.

The protein localises to the membrane. The catalysed reaction is L-tyrosyl-[protein] + ATP = O-(5'-adenylyl)-L-tyrosyl-[protein] + diphosphate. It carries out the reaction L-threonyl-[protein] + ATP = 3-O-(5'-adenylyl)-L-threonyl-[protein] + diphosphate. It catalyses the reaction 3-O-(5'-adenylyl)-L-threonyl-[protein] + H2O = L-threonyl-[protein] + AMP + H(+). With respect to regulation, the side chain of Glu-255 determines which of the two opposing activities (AMPylase or de-AMPylase) will take place. In response to endoplasmic reticulum stress, mediates de-AMPylase activity. Adenylyltransferase activity is inhibited by the inhibitory helix present at the N-terminus: Glu-255 binds ATP and competes with ATP-binding at Arg-394, thereby preventing adenylyltransferase activity. In unstressed cells, disengagement of Glu-255 promotes adenylyltransferase activity. Activation dissociates ATP-binding from Glu-255, allowing ordered binding of the entire ATP moiety with the alpha-phosphate in an orientation that is productive for accepting an incoming target hydroxyl side chain. Functionally, protein that can both mediate the addition of adenosine 5'-monophosphate (AMP) to specific residues of target proteins (AMPylation), and the removal of the same modification from target proteins (de-AMPylation), depending on the context. The side chain of Glu-255 determines which of the two opposing activities (AMPylase or de-AMPylase) will take place. Acts as a key regulator of the unfolded protein response (UPR) by mediating AMPylation or de-AMPylation of Hsc70-3/BiP. In unstressed cells, acts as an adenylyltransferase by mediating AMPylation of Hsc70-3/BiP at 'Thr-518', thereby inactivating it. In response to endoplasmic reticulum stress, acts as a phosphodiesterase by mediating removal of ATP (de-AMPylation) from Hsc70-3/BiP at 'Thr-518', leading to restore HSPA5/BiP activity. The polypeptide is Protein adenylyltransferase Fic (Drosophila willistoni (Fruit fly)).